Here is a 312-residue protein sequence, read N- to C-terminus: Ribonuclease HIII (312 aa).

The region spanning 95-311 is the RNase H type-2 domain; the sequence is FNCIGSDEAG…REKAQKILKP (217 aa). 3 residues coordinate a divalent metal cation: D101, E102, and D206.

Belongs to the RNase HII family. RnhC subfamily. Mn(2+) serves as cofactor. Mg(2+) is required as a cofactor.

The protein resides in the cytoplasm. It catalyses the reaction Endonucleolytic cleavage to 5'-phosphomonoester.. Its function is as follows. Endonuclease that specifically degrades the RNA of RNA-DNA hybrids. The protein is Ribonuclease HIII of Staphylococcus aureus (strain MW2).